Consider the following 175-residue polypeptide: Large ribosomal subunit protein uL10 (175 aa).

It belongs to the universal ribosomal protein uL10 family. In terms of assembly, part of the ribosomal stalk of the 50S ribosomal subunit. The N-terminus interacts with L11 and the large rRNA to form the base of the stalk. The C-terminus forms an elongated spine to which L12 dimers bind in a sequential fashion forming a multimeric L10(L12)X complex.

Functionally, forms part of the ribosomal stalk, playing a central role in the interaction of the ribosome with GTP-bound translation factors. This chain is Large ribosomal subunit protein uL10, found in Mycolicibacterium smegmatis (strain ATCC 700084 / mc(2)155) (Mycobacterium smegmatis).